We begin with the raw amino-acid sequence, 277 residues long: Large ribosomal subunit protein uL2 (277 aa).

2 disordered regions span residues M1 to H58 and G223 to R277. The span at E23–L33 shows a compositional bias: basic and acidic residues. The segment covering L37–H58 has biased composition (basic residues). Over residues G251–I267 the composition is skewed to basic and acidic residues. Over residues V268–R277 the composition is skewed to basic residues.

Belongs to the universal ribosomal protein uL2 family. In terms of assembly, part of the 50S ribosomal subunit. Forms a bridge to the 30S subunit in the 70S ribosome.

Its function is as follows. One of the primary rRNA binding proteins. Required for association of the 30S and 50S subunits to form the 70S ribosome, for tRNA binding and peptide bond formation. It has been suggested to have peptidyltransferase activity; this is somewhat controversial. Makes several contacts with the 16S rRNA in the 70S ribosome. The protein is Large ribosomal subunit protein uL2 of Saccharopolyspora erythraea (strain ATCC 11635 / DSM 40517 / JCM 4748 / NBRC 13426 / NCIMB 8594 / NRRL 2338).